Reading from the N-terminus, the 251-residue chain is Probable transcriptional regulatory protein DET0444 (251 aa).

This sequence belongs to the TACO1 family.

It localises to the cytoplasm. This is Probable transcriptional regulatory protein DET0444 from Dehalococcoides mccartyi (strain ATCC BAA-2266 / KCTC 15142 / 195) (Dehalococcoides ethenogenes (strain 195)).